The following is a 264-amino-acid chain: 3-methyl-2-oxobutanoate hydroxymethyltransferase (264 aa).

Residues Asp45 and Asp84 each coordinate Mg(2+). Residues 45–46, Asp84, and Lys112 each bind 3-methyl-2-oxobutanoate; that span reads DS. Glu114 contacts Mg(2+). Glu181 acts as the Proton acceptor in catalysis.

It belongs to the PanB family. As to quaternary structure, homodecamer; pentamer of dimers. Requires Mg(2+) as cofactor.

The protein localises to the cytoplasm. It catalyses the reaction 3-methyl-2-oxobutanoate + (6R)-5,10-methylene-5,6,7,8-tetrahydrofolate + H2O = 2-dehydropantoate + (6S)-5,6,7,8-tetrahydrofolate. Its pathway is cofactor biosynthesis; (R)-pantothenate biosynthesis; (R)-pantoate from 3-methyl-2-oxobutanoate: step 1/2. Catalyzes the reversible reaction in which hydroxymethyl group from 5,10-methylenetetrahydrofolate is transferred onto alpha-ketoisovalerate to form ketopantoate. This Escherichia coli (strain 55989 / EAEC) protein is 3-methyl-2-oxobutanoate hydroxymethyltransferase.